Reading from the N-terminus, the 141-residue chain is Small ribosomal subunit protein eS12 (141 aa).

Belongs to the eukaryotic ribosomal protein eS12 family. Component of the small ribosomal subunit. Mature ribosomes consist of a small (40S) and a large (60S) subunit. The 40S subunit contains about 32 different proteins and 1 molecule of RNA (18S). The 60S subunit contains about 42 different proteins and 3 molecules of RNA (28S, 5.8S and 5S).

It is found in the cytoplasm. Functionally, component of the ribosome, a large ribonucleoprotein complex responsible for the synthesis of proteins in the cell. The small ribosomal subunit (SSU) binds messenger RNAs (mRNAs) and translates the encoded message by selecting cognate aminoacyl-transfer RNA (tRNA) molecules. The large subunit (LSU) contains the ribosomal catalytic site termed the peptidyl transferase center (PTC), which catalyzes the formation of peptide bonds, thereby polymerizing the amino acids delivered by tRNAs into a polypeptide chain. The nascent polypeptides leave the ribosome through a tunnel in the LSU and interact with protein factors that function in enzymatic processing, targeting, and the membrane insertion of nascent chains at the exit of the ribosomal tunnel. This is Small ribosomal subunit protein eS12 from Plasmodium falciparum (isolate 3D7).